A 110-amino-acid chain; its full sequence is UPF0122 protein SGO_1122 (110 aa).

It belongs to the UPF0122 family.

Might take part in the signal recognition particle (SRP) pathway. This is inferred from the conservation of its genetic proximity to ftsY/ffh. May be a regulatory protein. The polypeptide is UPF0122 protein SGO_1122 (Streptococcus gordonii (strain Challis / ATCC 35105 / BCRC 15272 / CH1 / DL1 / V288)).